We begin with the raw amino-acid sequence, 248 residues long: Pyridoxal 4-dehydrogenase (248 aa).

11 to 35 (LVTGAAQGIGKAIAARLAADGATVI) serves as a coordination point for NAD(+). Ser-141 serves as a coordination point for substrate. The active-site Proton acceptor is the Tyr-154.

The protein belongs to the short-chain dehydrogenases/reductases (SDR) family. In terms of assembly, homotetramer.

It catalyses the reaction pyridoxal + NAD(+) = 4-pyridoxolactone + NADH + H(+). It participates in cofactor degradation; B6 vitamer degradation; 4-pyridoxate from pyridoxal: step 1/2. Its function is as follows. Involved in the degradation of pyridoxine or pyridoxamine (free, phosphate-unbound, forms of vitamin B6). Oxidizes pyridoxal to 4-pyridoxolactone, but does not have activity toward pyridoxal 5'-phosphate, pyridoxine, pyridoxamine, pyridoxamine 5'-phosphate, 4-phthalaldehyde, 2-nitrobenzaldehyde, pyridine, formaldehyde, 2-carboxybenzaldehyde or sugars. In Mesorhizobium japonicum (strain LMG 29417 / CECT 9101 / MAFF 303099) (Mesorhizobium loti (strain MAFF 303099)), this protein is Pyridoxal 4-dehydrogenase.